The chain runs to 502 residues: Phenylacetaldehyde dehydrogenase (502 aa).

G251 to G256 is a binding site for NAD(+). Active-site residues include E273 and C307.

Belongs to the aldehyde dehydrogenase family.

It catalyses the reaction 2-phenylacetaldehyde + NAD(+) + H2O = 2-phenylacetate + NADH + 2 H(+). Its pathway is aromatic compound metabolism. Phenylacetaldehyde dehydrogenase that catalyzes the last step in the aerobic styrene degradation pathway by mediating oxidation of phenylacetaldehyde to phenylacetic acid. This chain is Phenylacetaldehyde dehydrogenase (styD), found in Pseudomonas fluorescens.